We begin with the raw amino-acid sequence, 264 residues long: Cercarial protease (264 aa).

An N-terminal signal peptide occupies residues 1 to 19; that stretch reads MSNRWRFVVVVTLFTYCLT. Residues 20–27 constitute a propeptide that is removed on maturation; sequence FERVSTWL. The Peptidase S1 domain maps to 28–264; the sequence is IRSGEPVQHP…RMLDFVRSNI (237 aa). An intrachain disulfide couples Cys-53 to Cys-69. Active-site charge relay system residues include His-68 and Asp-126. An intrachain disulfide couples Cys-192 to Cys-202. The active-site Charge relay system is the Ser-218.

Belongs to the peptidase S1 family. In terms of tissue distribution, acetabular (penetration) glands.

Its activity is regulated as follows. Activated by an autocatalytic mechanism. Its function is as follows. This protease cleaves elastin and thus facilitates penetration of schistosome parasite larvae through elastin-rich tissue of the host. The polypeptide is Cercarial protease (Schistosoma mansoni (Blood fluke)).